Here is a 383-residue protein sequence, read N- to C-terminus: Acetylornithine deacetylase (383 aa).

His80 serves as a coordination point for Zn(2+). Asp82 is a catalytic residue. Residue Asp112 participates in Zn(2+) binding. Glu144 is a catalytic residue. Zn(2+) contacts are provided by Glu145, Glu169, and His355.

Belongs to the peptidase M20A family. ArgE subfamily. As to quaternary structure, homodimer. Zn(2+) serves as cofactor. The cofactor is Co(2+). It depends on glutathione as a cofactor.

It is found in the cytoplasm. It catalyses the reaction N(2)-acetyl-L-ornithine + H2O = L-ornithine + acetate. The protein operates within amino-acid biosynthesis; L-arginine biosynthesis; L-ornithine from N(2)-acetyl-L-ornithine (linear): step 1/1. Functionally, catalyzes the hydrolysis of the amide bond of N(2)-acetylated L-amino acids. Cleaves the acetyl group from N-acetyl-L-ornithine to form L-ornithine, an intermediate in L-arginine biosynthesis pathway, and a branchpoint in the synthesis of polyamines. The protein is Acetylornithine deacetylase of Escherichia coli O45:K1 (strain S88 / ExPEC).